A 216-amino-acid chain; its full sequence is Chaperone protein TorD (216 aa).

This sequence belongs to the TorD/DmsD family. TorD subfamily.

It is found in the cytoplasm. Involved in the biogenesis of TorA. Acts on TorA before the insertion of the molybdenum cofactor and, as a result, probably favors a conformation of the apoenzyme that is competent for acquiring the cofactor. This is Chaperone protein TorD from Ferrimonas balearica (strain DSM 9799 / CCM 4581 / KCTC 23876 / PAT).